We begin with the raw amino-acid sequence, 231 residues long: Probable septum site-determining protein MinC (231 aa).

A disordered region spans residues 102–125 (KEKAPRPAPAPQAPAQNTTPVTKT).

The protein belongs to the MinC family. In terms of assembly, interacts with MinD and FtsZ.

In terms of biological role, cell division inhibitor that blocks the formation of polar Z ring septums. Rapidly oscillates between the poles of the cell to destabilize FtsZ filaments that have formed before they mature into polar Z rings. Prevents FtsZ polymerization. The sequence is that of Probable septum site-determining protein MinC from Escherichia coli O139:H28 (strain E24377A / ETEC).